The primary structure comprises 1358 residues: DNA-directed RNA polymerase subunit beta (1358 aa).

Belongs to the RNA polymerase beta chain family. As to quaternary structure, the RNAP catalytic core consists of 2 alpha, 1 beta, 1 beta' and 1 omega subunit. When a sigma factor is associated with the core the holoenzyme is formed, which can initiate transcription.

The catalysed reaction is RNA(n) + a ribonucleoside 5'-triphosphate = RNA(n+1) + diphosphate. Its function is as follows. DNA-dependent RNA polymerase catalyzes the transcription of DNA into RNA using the four ribonucleoside triphosphates as substrates. This chain is DNA-directed RNA polymerase subunit beta, found in Thioalkalivibrio sulfidiphilus (strain HL-EbGR7).